The primary structure comprises 1358 residues: DNA-directed RNA polymerase subunit beta (1358 aa).

This sequence belongs to the RNA polymerase beta chain family. In terms of assembly, the RNAP catalytic core consists of 2 alpha, 1 beta, 1 beta' and 1 omega subunit. When a sigma factor is associated with the core the holoenzyme is formed, which can initiate transcription.

The enzyme catalyses RNA(n) + a ribonucleoside 5'-triphosphate = RNA(n+1) + diphosphate. DNA-dependent RNA polymerase catalyzes the transcription of DNA into RNA using the four ribonucleoside triphosphates as substrates. The chain is DNA-directed RNA polymerase subunit beta from Xanthobacter autotrophicus (strain ATCC BAA-1158 / Py2).